The chain runs to 340 residues: MTENALLLLNLGSPDSTRVEDVRRYLDQFLMDPYVVDLPWPLRRLLVSLILIKRPAESAHAYSSIWWDEGSPLIVLSRRLQEAMKPHWPHGPVELAMRYGQPAIEKVLLDLARRGIRRVTLAPLYPQFADSTTTTAEQEVRRVIAAHRLELEVSTLPPFYDQPVYLDALVESVRPYLQQPHDHLLLSFHGLPERHIRKLVKDPAHDLLAENSRNVSPEALALCYRSQCLRTAEAFAERAGLEQGRWSVSFQSRLGRAKWIEPYTDAKLDELVQRGVKRLLVMCPAFVADCIETLEEIGMRGREQFISAGGEDLVLIPCLNDHPAWVGALGEMSGRLARPL.

The Fe cation site is built by histidine 189 and glutamate 292.

The protein belongs to the ferrochelatase family.

The protein resides in the cytoplasm. It catalyses the reaction heme b + 2 H(+) = protoporphyrin IX + Fe(2+). The protein operates within porphyrin-containing compound metabolism; protoheme biosynthesis; protoheme from protoporphyrin-IX: step 1/1. Catalyzes the ferrous insertion into protoporphyrin IX. The sequence is that of Ferrochelatase from Pseudomonas aeruginosa (strain UCBPP-PA14).